Consider the following 504-residue polypeptide: MTEAALVEGQVKLRDGKKWKSRWLVLRKPSPVADCLLMLVYKDKSERIKGLRERSSLTLEDICGLEPGLPYEGLVHTLAIVCLSQAIMLGFDSHEAMCAWDARIRYALGEVHRFHVTVAPGTKLESGPATLHLCNDVLVLARDIPPAVTGQWKLSDLRRYGAVPSGFIFEGGTRCGYWAGVFFLSSAEGEQISFLFDCIVRGISPTKGPFGLRPVLPDPSPPGPSTVEERVAQEALETLQLEKRLSLLSHAGRPGSGGDDRSLSSSSSEASHLDVSASSRLTAWPEQSSSSASTSQEGPRPAAAQAAGEAMVGASRPPPKPLRPRQLQEVGRQSSSDSGIATGSHSSYSSSLSSYAGSSLDVWRATDELGSLLSLPAAGAPEPSLCTCLPGTVEYQVPTSLRAHYDTPRSLCLAPRDHSPPSQGSPGNSAARDSGGQTSAGCPSGWLGTRRRGLVMEAPQGSEATLPGPAPGEPWEAGGPHAGPPPAFFSACPVCGGLKVNPPP.

The PH domain occupies 4-109 (AALVEGQVKL…WDARIRYALG (106 aa)). The region spanning 105 to 210 (RYALGEVHRF…RGISPTKGPF (106 aa)) is the IRS-type PTB domain. Disordered regions lie at residues 210–229 (FGLRPVLPDPSPPGPSTVEE), 249–351 (SHAG…YSSS), and 411–483 (LCLA…PHAG). 2 stretches are compositionally biased toward low complexity: residues 263–279 (LSSSSSEASHLDVSASS) and 288–310 (SSSSASTSQEGPRPAAAQAAGEA). Polar residues predominate over residues 331–341 (GRQSSSDSGIA).

Homodimer. Forms a heterotetramer composed of 2 DOK7 and 2 MUSK molecules which facilitates MUSK trans-autophosphorylation on tyrosine residue and activation. Interacts (via IRS-type PTB domain) with MUSK (via cytoplasmic part); requires MUSK phosphorylation. As to expression, preferentially expressed in skeletal muscle and heart. Present in thigh muscle, diaphragm and heart but not in the liver or spleen (at protein level).

The protein localises to the cell membrane. It localises to the synapse. Its function is as follows. Probable muscle-intrinsic activator of MUSK that plays an essential role in neuromuscular synaptogenesis. Acts in aneural activation of MUSK and subsequent acetylcholine receptor (AchR) clustering in myotubes. Induces autophosphorylation of MUSK. In Homo sapiens (Human), this protein is Protein Dok-7 (DOK7).